Here is a 35-residue protein sequence, read N- to C-terminus: Pheromone-binding protein 2 (35 aa).

The protein belongs to the PBP/GOBP family. Homodimer. Antenna.

This major soluble protein in olfactory sensilla of male moths might serve to solubilize the extremely hydrophobic pheromone molecules and to transport pheromone through the aqueous lymph to receptors located on olfactory cilia. The protein is Pheromone-binding protein 2 of Lymantria dispar (Gypsy moth).